We begin with the raw amino-acid sequence, 352 residues long: Glycoprotein integral membrane protein 1 (352 aa).

Residues 1 to 25 form the signal peptide; the sequence is MASRCKIHLTVAYLLILCILASAQS. At 26 to 281 the chain is on the extracellular side; sequence KQMTTETVVL…KLRRFLSDSV (256 aa). 6 N-linked (GlcNAc...) asparagine glycosylation sites follow: N36, N44, N89, N109, N151, and N197. Residues 206 to 245 are disordered; it reads NSETTQEEIAAPGKLPETPLRMDPETLYESREEEERRSDS. Over residues 225-244 the composition is skewed to basic and acidic residues; that stretch reads LRMDPETLYESREEEERRSD. Residues 282 to 302 form a helical membrane-spanning segment; it reads PLFFLVMWVVVVGVAGSAVVI. The Cytoplasmic portion of the chain corresponds to 303-352; sequence KILDLIFPSCEHRGFFHLNPETLMPDDEKVSLIDNMEGDMTEKSILLIEK.

It localises to the membrane. This Danio rerio (Zebrafish) protein is Glycoprotein integral membrane protein 1 (ginm1).